Consider the following 312-residue polypeptide: Ribonuclease Z (312 aa).

The Zn(2+) site is built by His62, His64, Asp66, His67, His144, Asp215, and His273. Asp66 (proton acceptor) is an active-site residue.

The protein belongs to the RNase Z family. As to quaternary structure, homodimer. Requires Zn(2+) as cofactor.

The enzyme catalyses Endonucleolytic cleavage of RNA, removing extra 3' nucleotides from tRNA precursor, generating 3' termini of tRNAs. A 3'-hydroxy group is left at the tRNA terminus and a 5'-phosphoryl group is left at the trailer molecule.. Zinc phosphodiesterase, which displays some tRNA 3'-processing endonuclease activity. Probably involved in tRNA maturation, by removing a 3'-trailer from precursor tRNA. This is Ribonuclease Z from Prochlorococcus marinus (strain MIT 9215).